We begin with the raw amino-acid sequence, 310 residues long: tRNA dimethylallyltransferase (310 aa).

ATP is bound at residue 24–31 (GPTASGKT). 26–31 (TASGKT) serves as a coordination point for substrate. An interaction with substrate tRNA region spans residues 49–52 (DSRQ).

It belongs to the IPP transferase family. As to quaternary structure, monomer. It depends on Mg(2+) as a cofactor.

The catalysed reaction is adenosine(37) in tRNA + dimethylallyl diphosphate = N(6)-dimethylallyladenosine(37) in tRNA + diphosphate. In terms of biological role, catalyzes the transfer of a dimethylallyl group onto the adenine at position 37 in tRNAs that read codons beginning with uridine, leading to the formation of N6-(dimethylallyl)adenosine (i(6)A). This chain is tRNA dimethylallyltransferase, found in Synechococcus sp. (strain CC9311).